Consider the following 482-residue polypeptide: Nucleoside triphosphate pyrophosphatase/Nudix hydrolase fusion protein (482 aa).

Residues 1 to 299 are maf-like; sequence MSIPLILASK…DLWNVGRGEL (299 aa). Catalysis depends on D167, which acts as the Proton acceptor. In terms of domain architecture, Nudix hydrolase spans 338 to 475; sequence GTNGASGILL…TDWPRFAARL (138 aa).

The protein in the N-terminal section; belongs to the Maf family. A divalent metal cation serves as cofactor.

Its subcellular location is the cytoplasm. It catalyses the reaction a ribonucleoside 5'-triphosphate + H2O = a ribonucleoside 5'-phosphate + diphosphate + H(+). The enzyme catalyses a 2'-deoxyribonucleoside 5'-triphosphate + H2O = a 2'-deoxyribonucleoside 5'-phosphate + diphosphate + H(+). Its function is as follows. Nucleoside triphosphate pyrophosphatase. May have a dual role in cell division arrest and in preventing the incorporation of modified nucleotides into cellular nucleic acids. In Bifidobacterium longum (strain NCC 2705), this protein is Nucleoside triphosphate pyrophosphatase/Nudix hydrolase fusion protein.